The primary structure comprises 193 residues: PXMP2/4 family protein 2 (193 aa).

Transmembrane regions (helical) follow at residues V56–L78, I96–I116, L132–S152, and V160–D180.

It belongs to the peroxisomal membrane protein PXMP2/4 family.

It is found in the membrane. The sequence is that of PXMP2/4 family protein 2 from Dictyostelium discoideum (Social amoeba).